The sequence spans 247 residues: UPF0259 membrane protein BUAPTUC7_273 (247 aa).

A run of 6 helical transmembrane segments spans residues 20 to 40, 85 to 105, 114 to 134, 137 to 157, 188 to 208, and 218 to 238; these read IGAI…IDMF, IMES…LISF, IVSS…LNFL, FIIQ…SIIL, IIGP…MLLA, and LFLI…IYLF.

Belongs to the UPF0259 family.

Its subcellular location is the cell membrane. In Buchnera aphidicola subsp. Acyrthosiphon pisum (strain Tuc7), this protein is UPF0259 membrane protein BUAPTUC7_273.